Consider the following 570-residue polypeptide: Phosphoglucomutase 1 (570 aa).

N-acetylserine is present on Ser2. Arg24 and Ser120 together coordinate alpha-D-glucose 1,6-bisphosphate. Ser120 functions as the Phosphoserine intermediate in the catalytic mechanism. Positions 120, 291, 293, and 295 each coordinate Mg(2+). Position 120 is a phosphoserine (Ser120). 6 residues coordinate alpha-D-glucose 1,6-bisphosphate: Asp295, Arg296, Thr360, Glu379, Ser381, and Lys392.

Belongs to the phosphohexose mutase family. As to quaternary structure, monomer. Mg(2+) serves as cofactor.

Its subcellular location is the cytoplasm. The enzyme catalyses alpha-D-glucose 1-phosphate = alpha-D-glucose 6-phosphate. It catalyses the reaction O-phospho-L-seryl-[protein] + alpha-D-glucose 1-phosphate = alpha-D-glucose 1,6-bisphosphate + L-seryl-[protein]. The catalysed reaction is alpha-D-glucose 1,6-bisphosphate + L-seryl-[protein] = O-phospho-L-seryl-[protein] + alpha-D-glucose 6-phosphate. Functionally, minor phosphoglucomutase isozyme that catalyzes the reversible interconversion of alpha-D-glucose 1-phosphate and alpha-D-glucose 6-phosphate. The mechanism proceeds via the intermediate compound alpha-D-glucose 1,6-bisphosphate. Constitutes about 10-20% of the phosphoglucomutase activity in the cell. Key enzyme in hexose metabolism. The forward reaction is an essential step in the energy metabolism of galactose since the product of the galactose pathway enzymes in yeast is glucose 1-phosphate. The reverse reaction is an essential step for biosynthesis when carbon sources other than galactose are the energy source because glucose 1-phosphate is the starting point for the synthesis of UDP-glucose, which acts as a precursor for the synthesis of oligosaccharides and trehalose. The chain is Phosphoglucomutase 1 from Saccharomyces cerevisiae (strain ATCC 204508 / S288c) (Baker's yeast).